An 86-amino-acid polypeptide reads, in one-letter code: NAD(P)H-quinone oxidoreductase subunit O (86 aa).

Belongs to the complex I NdhO subunit family. As to quaternary structure, NDH-1 can be composed of about 15 different subunits; different subcomplexes with different compositions have been identified which probably have different functions.

The protein localises to the cellular thylakoid membrane. It carries out the reaction a plastoquinone + NADH + (n+1) H(+)(in) = a plastoquinol + NAD(+) + n H(+)(out). The catalysed reaction is a plastoquinone + NADPH + (n+1) H(+)(in) = a plastoquinol + NADP(+) + n H(+)(out). NDH-1 shuttles electrons from an unknown electron donor, via FMN and iron-sulfur (Fe-S) centers, to quinones in the respiratory and/or the photosynthetic chain. The immediate electron acceptor for the enzyme in this species is believed to be plastoquinone. Couples the redox reaction to proton translocation, and thus conserves the redox energy in a proton gradient. Cyanobacterial NDH-1 also plays a role in inorganic carbon-concentration. The protein is NAD(P)H-quinone oxidoreductase subunit O of Prochlorococcus marinus (strain SARG / CCMP1375 / SS120).